The sequence spans 188 residues: C-type lectin domain family 5 member A (188 aa).

Residues 1 to 4 (MNWH) lie on the Cytoplasmic side of the membrane. Residues 5–27 (MIISGLIVVVLKVVGMTLFLLYF) traverse the membrane as a helical; Signal-anchor for type II membrane protein segment. The Extracellular portion of the chain corresponds to 28–188 (PQIFNKSNDG…YRRICEKNAK (161 aa)). Asn32 carries an N-linked (GlcNAc...) asparagine glycan. A disulfide bridge links Cys71 with Cys82. Positions 78–184 (YQARCFFLST…CDISYRRICE (107 aa)) constitute a C-type lectin domain. N-linked (GlcNAc...) asparagine glycosylation is found at Asn93, Asn144, and Asn151. Cystine bridges form between Cys99–Cys183 and Cys161–Cys175.

As to quaternary structure, monomer. Homodimer. The majority of CLEC5A is expressed as a monomeric form on macrophages. Interacts with TYROBP/DAP12. The interaction with TYROBP is required for CLEC5A cell surface expression. Interacts with HCST/DAP10. Forms a CLEC5A/TYROBP/HCST trimolecular complex depending almost solely on TYROBP. In terms of assembly, (Microbial infection) Interacts with dengue virus envelope protein E. In terms of processing, N-glycosylated. Contains sialic acid residues. In terms of tissue distribution, highly expressed in bone marrow with lower levels in synovium, lung and bronchus. Expressed in peripheral blood monocytes and in the monocyte/macrophage cell lines U-937 and Mono-Mac-6, but not in cell lines of other origins. Expression is down-regulated when monocytes differentiate into dendritic cells.

Its subcellular location is the cell membrane. Functions as a positive regulator of osteoclastogenesis. Cell surface receptor that signals via TYROBP. Regulates inflammatory responses. Functionally, (Microbial infection) Critical macrophage receptor for dengue virus serotypes 1-4. The binding of dengue virus to CLEC5A triggers signaling through the phosphorylation of TYROBP. This interaction does not result in viral entry, but stimulates pro-inflammatory cytokine release. The sequence is that of C-type lectin domain family 5 member A (CLEC5A) from Homo sapiens (Human).